The primary structure comprises 167 residues: Large ribosomal subunit protein uL10 (167 aa).

This sequence belongs to the universal ribosomal protein uL10 family. Part of the ribosomal stalk of the 50S ribosomal subunit. The N-terminus interacts with L11 and the large rRNA to form the base of the stalk. The C-terminus forms an elongated spine to which L12 dimers bind in a sequential fashion forming a multimeric L10(L12)X complex.

In terms of biological role, forms part of the ribosomal stalk, playing a central role in the interaction of the ribosome with GTP-bound translation factors. In Flavobacterium johnsoniae (strain ATCC 17061 / DSM 2064 / JCM 8514 / BCRC 14874 / CCUG 350202 / NBRC 14942 / NCIMB 11054 / UW101) (Cytophaga johnsonae), this protein is Large ribosomal subunit protein uL10.